Reading from the N-terminus, the 403-residue chain is Phosphopentomutase (403 aa).

Positions 13, 298, 303, 339, 340, and 351 each coordinate Mn(2+).

The protein belongs to the phosphopentomutase family. Mn(2+) serves as cofactor.

It is found in the cytoplasm. It carries out the reaction 2-deoxy-alpha-D-ribose 1-phosphate = 2-deoxy-D-ribose 5-phosphate. It catalyses the reaction alpha-D-ribose 1-phosphate = D-ribose 5-phosphate. It participates in carbohydrate degradation; 2-deoxy-D-ribose 1-phosphate degradation; D-glyceraldehyde 3-phosphate and acetaldehyde from 2-deoxy-alpha-D-ribose 1-phosphate: step 1/2. Functionally, isomerase that catalyzes the conversion of deoxy-ribose 1-phosphate (dRib-1-P) and ribose 1-phosphate (Rib-1-P) to deoxy-ribose 5-phosphate (dRib-5-P) and ribose 5-phosphate (Rib-5-P), respectively. The protein is Phosphopentomutase of Streptococcus equi subsp. zooepidemicus (strain MGCS10565).